The primary structure comprises 94 residues: Sulfocarbamoylase-1 (94 aa).

As to quaternary structure, homodimer. In terms of tissue distribution, ubiquitous (at protein level). Highest levels of expression in crystalline style followed by digestive gland and mantle.

Its activity is regulated as follows. Strongly inhibited by the serine proteinase inhibitor AEBSF. Weakly inhibited by the proteinase inhibitors BSF and aprotinin, and by EDTA. Not inhibited by the proteinase inhibitors bestatin, E-64 and leupeptin. Functionally, hydrolysis of sulfocarbamoyl esters of paralytic shellfish toxins. Does not hydrolyze the carbamoyl esters of paralytic shellfish toxins. Ester hydrolysis is significantly affected by the stereochemistry of sulfate esters at C-11 of the substrate toxin. The protein is Sulfocarbamoylase-1 of Megangulus venulosus (Japanese bivalve).